The following is a 366-amino-acid chain: Histidinol-phosphate aminotransferase (366 aa).

The residue at position 228 (lysine 228) is an N6-(pyridoxal phosphate)lysine.

The protein belongs to the class-II pyridoxal-phosphate-dependent aminotransferase family. Histidinol-phosphate aminotransferase subfamily. In terms of assembly, homodimer. The cofactor is pyridoxal 5'-phosphate.

It carries out the reaction L-histidinol phosphate + 2-oxoglutarate = 3-(imidazol-4-yl)-2-oxopropyl phosphate + L-glutamate. The protein operates within amino-acid biosynthesis; L-histidine biosynthesis; L-histidine from 5-phospho-alpha-D-ribose 1-diphosphate: step 7/9. The chain is Histidinol-phosphate aminotransferase from Campylobacter fetus subsp. fetus (strain 82-40).